A 245-amino-acid polypeptide reads, in one-letter code: Suppressor of aph-1 (245 aa).

Positions 12–60 constitute a GYF domain; that stretch reads DTKWHYLGPDSEKYGPYMSKDMLFWLQAGYFNDGLQLKTENEPNYHTLG. The disordered stretch occupies residues 126–166; the sequence is NQNGPPMGAQMHSQPPSEPIDAGSLSHTPDSENETRLNEQT.

Its function is as follows. Involved in negative regulation of early and late embryonic Notch signaling. The polypeptide is Suppressor of aph-1 (Caenorhabditis elegans).